Consider the following 211-residue polypeptide: Thiamine-phosphate synthase (211 aa).

Residues 37-41 (QLRIK) and asparagine 69 contribute to the 4-amino-2-methyl-5-(diphosphooxymethyl)pyrimidine site. 2 residues coordinate Mg(2+): aspartate 70 and aspartate 89. Serine 108 provides a ligand contact to 4-amino-2-methyl-5-(diphosphooxymethyl)pyrimidine. Position 134-136 (134-136 (TQT)) interacts with 2-[(2R,5Z)-2-carboxy-4-methylthiazol-5(2H)-ylidene]ethyl phosphate. Position 137 (lysine 137) interacts with 4-amino-2-methyl-5-(diphosphooxymethyl)pyrimidine. 2-[(2R,5Z)-2-carboxy-4-methylthiazol-5(2H)-ylidene]ethyl phosphate is bound by residues glycine 166 and 186-187 (VS).

Belongs to the thiamine-phosphate synthase family. Mg(2+) serves as cofactor.

The enzyme catalyses 2-[(2R,5Z)-2-carboxy-4-methylthiazol-5(2H)-ylidene]ethyl phosphate + 4-amino-2-methyl-5-(diphosphooxymethyl)pyrimidine + 2 H(+) = thiamine phosphate + CO2 + diphosphate. It catalyses the reaction 2-(2-carboxy-4-methylthiazol-5-yl)ethyl phosphate + 4-amino-2-methyl-5-(diphosphooxymethyl)pyrimidine + 2 H(+) = thiamine phosphate + CO2 + diphosphate. It carries out the reaction 4-methyl-5-(2-phosphooxyethyl)-thiazole + 4-amino-2-methyl-5-(diphosphooxymethyl)pyrimidine + H(+) = thiamine phosphate + diphosphate. It functions in the pathway cofactor biosynthesis; thiamine diphosphate biosynthesis; thiamine phosphate from 4-amino-2-methyl-5-diphosphomethylpyrimidine and 4-methyl-5-(2-phosphoethyl)-thiazole: step 1/1. Functionally, condenses 4-methyl-5-(beta-hydroxyethyl)thiazole monophosphate (THZ-P) and 2-methyl-4-amino-5-hydroxymethyl pyrimidine pyrophosphate (HMP-PP) to form thiamine monophosphate (TMP). In Escherichia coli O139:H28 (strain E24377A / ETEC), this protein is Thiamine-phosphate synthase.